Consider the following 361-residue polypeptide: MSKFSFTIHSHYKKARSGVITTAHGEIRTPAFMPVGTRGAVKAMLTEAVVETGADILLGNTYHLMLQPSAERIAYLGGLHKFMNWDKPILTDSGGFQVMSLSKLCKITEEGVSFRSHINGNKYMLTPEYSTEIQYLLGSTITMALDECTPYPSTFEKAKTSMHLTTRWANRSRDAFVKREGYAQFGIIQGSVYKELREQSVKDLVKCDFEGYAIGGLAVGEGQELMFRVLDYVPDFLPQNKPRYLMGVGKPSDIIGAVSRGIDMFDCVIPTRSGRNGQAFTKYGTVNIRNSKYADDKEPLEHDCKCPACTNYTKAYLHHLVRIREILGPMLMTWHNLTYFQNLMSRIRTYIKLGKDFDFVH.

Aspartate 92 functions as the Proton acceptor in the catalytic mechanism. Residues 92 to 96 (DSGGF), aspartate 146, glutamine 189, and glycine 216 contribute to the substrate site. The tract at residues 247–253 (GVGKPSD) is RNA binding. Aspartate 266 serves as the catalytic Nucleophile. Positions 271–275 (TRSGR) are RNA binding; important for wobble base 34 recognition. Zn(2+) contacts are provided by cysteine 304, cysteine 306, cysteine 309, and histidine 335.

This sequence belongs to the queuine tRNA-ribosyltransferase family. Homodimer. Within each dimer, one monomer is responsible for RNA recognition and catalysis, while the other monomer binds to the replacement base PreQ1. Zn(2+) serves as cofactor.

The enzyme catalyses 7-aminomethyl-7-carbaguanine + guanosine(34) in tRNA = 7-aminomethyl-7-carbaguanosine(34) in tRNA + guanine. Its pathway is tRNA modification; tRNA-queuosine biosynthesis. Catalyzes the base-exchange of a guanine (G) residue with the queuine precursor 7-aminomethyl-7-deazaguanine (PreQ1) at position 34 (anticodon wobble position) in tRNAs with GU(N) anticodons (tRNA-Asp, -Asn, -His and -Tyr). Catalysis occurs through a double-displacement mechanism. The nucleophile active site attacks the C1' of nucleotide 34 to detach the guanine base from the RNA, forming a covalent enzyme-RNA intermediate. The proton acceptor active site deprotonates the incoming PreQ1, allowing a nucleophilic attack on the C1' of the ribose to form the product. After dissociation, two additional enzymatic reactions on the tRNA convert PreQ1 to queuine (Q), resulting in the hypermodified nucleoside queuosine (7-(((4,5-cis-dihydroxy-2-cyclopenten-1-yl)amino)methyl)-7-deazaguanosine). The polypeptide is Queuine tRNA-ribosyltransferase (Rickettsia prowazekii (strain Madrid E)).